The sequence spans 427 residues: G2/mitotic-specific cyclin-B1 (427 aa).

Residues 33–126 form a disordered region; that stretch reads ATSKPGLRPR…DTPSPSPMET (94 aa). Lys-73 carries the N6-acetyllysine modification. A compositionally biased stretch (basic and acidic residues) spans 100–110; sequence EPEHVKEDKLS. The residue at position 120 (Ser-120) is a Phosphoserine; by CDK1. Residue Ser-122 is modified to Phosphoserine. Ser-127 carries the phosphoserine; by PLK1 modification. Ser-141 carries the post-translational modification Phosphoserine. 2 interaction with CDK2 regions span residues 163-171 and 252-255; these read EYVKDIYAY and YEEM. At Thr-315 the chain carries Phosphothreonine.

This sequence belongs to the cyclin family. Cyclin AB subfamily. Interacts with the CDC2 protein kinase to form a serine/threonine kinase holoenzyme complex also known as maturation promoting factor (MPF). The cyclin subunit imparts substrate specificity to the complex. Binds HEI10. Interacts with catalytically active RALBP1 and CDC2 during mitosis to form an endocytotic complex during interphase. Interacts with CCNF; interaction is required for nuclear localization. Interacts with CDK5RAP3. Interacts with RFPL4A and UBE2A. Interacts with INCA1. In terms of processing, ubiquitinated by the SCF(NIPA) complex during interphase, leading to its destruction. Deubiquitinated by USP22 during G2/M phase. Phosphorylated by PLK1 at Ser-127 on centrosomes during prophase: phosphorylation by PLK1 does not cause nuclear import. Phosphorylation at Ser-141 was also reported to be mediated by PLK1 but Ser-127 seems to be the primary phosphorylation site.

It is found in the cytoplasm. Its subcellular location is the nucleus. It localises to the cytoskeleton. The protein localises to the microtubule organizing center. The protein resides in the centrosome. In terms of biological role, essential for the control of the cell cycle at the G2/M (mitosis) transition. This Bos taurus (Bovine) protein is G2/mitotic-specific cyclin-B1 (CCNB1).